A 219-amino-acid polypeptide reads, in one-letter code: uncharacterized protein (219 aa).

Aspartate 58 is an active-site residue.

This sequence belongs to the pseudouridine synthase RluA family.

It carries out the reaction a uridine in RNA = a pseudouridine in RNA. This is an uncharacterized protein from Zymomonas mobilis subsp. mobilis (strain ATCC 31821 / ZM4 / CP4).